The primary structure comprises 367 residues: Cyclin-D3-2 (367 aa).

Positions Ser324–Ser335 are enriched in low complexity. Residues Ser324 to Glu347 form a disordered region.

This sequence belongs to the cyclin family. Cyclin D subfamily. As to quaternary structure, interacts with CDKA-1. Expressed in developing vegetative and floral primordia.

Promotes divisions in the guard cells (GCs) after the guard mother cells (GMC) symmetric division when in the presence of CDKA-1. This chain is Cyclin-D3-2 (CYCD3-2), found in Arabidopsis thaliana (Mouse-ear cress).